Reading from the N-terminus, the 502-residue chain is Acetylcholine receptor subunit alpha-type unc-63 (502 aa).

A signal peptide spans 1–23; the sequence is MGPNDHGFAYILIFLLLSPPTHA. Residues 24–263 lie on the Extracellular side of the membrane; it reads NRDANRLFED…HLRRKTLFYT (240 aa). N-linked (GlcNAc...) asparagine glycosylation occurs at N136. A disulfide bridge connects residues C151 and C165. Transmembrane regions (helical) follow at residues 264–284, 293–313, and 326–346; these read VNLI…FYLP, LCIS…EIIP, and LLFT…TLNV. Over 347 to 470 the chain is Cytoplasmic; it reads HYRSPTTHTM…WKYISVVMDR (124 aa). Residues 471 to 491 traverse the membrane as a helical segment; that stretch reads IFLITFTFACAFGTVVIIARA.

It belongs to the ligand-gated ion channel (TC 1.A.9) family. Acetylcholine receptor (TC 1.A.9.1) subfamily. As to quaternary structure, component of nicotinic acetylcholine receptor. In muscles, composed of 2 non-alpha subunits lev-1 and unc-29, and 3 alpha subunits unc-38, unc-63 and lev-8. In cholinergic motoneurons, composed of 2 non-alpha subunits acr-2 and acr-3, and 3 alpha subunits unc-38, unc-63 and acr-12. Interacts with lev-10. Expressed in body wall muscles, in vulval muscles and in neurons.

The protein resides in the postsynaptic cell membrane. It localises to the cell membrane. Its function is as follows. Alpha subunit of nicotinic acetylcholine receptor (nAChR). Probably acts in cholinergic motoneurons to regulate presynaptic neurotransmitter release, thereby ensuring normal level of excitation of cholinergic motoneurons during locomotion. Involved in nAChR sensitivity to nicotine and levamisole. The polypeptide is Acetylcholine receptor subunit alpha-type unc-63 (unc-63) (Caenorhabditis elegans).